Here is a 326-residue protein sequence, read N- to C-terminus: Macrosialin (326 aa).

Positions 1–20 (MRLPVCLILLGPLIAQGTEE) are cleaved as a signal peptide. The interval 21 to 109 (DCPHKKAVTL…ATSPRSSTVG (89 aa)) is mucin-like. At 21–291 (DCPHKKAVTL…PCFSCNRDQS (271 aa)) the chain is on the extracellular side. The segment covering 38 to 58 (PTATESTASPTTSHRPTTTSH) has biased composition (low complexity). Positions 38–129 (PTATESTASP…SPRSKGALGN (92 aa)) are disordered. Repeat copies occupy residues 44 to 49 (TASPTT), 50 to 64 (SHRP…VTVH), 65 to 72 (TSSGPTTV), and 73 to 88 (THNP…ATIS). Over residues 59–69 (GNVTVHTSSGP) the composition is skewed to polar residues. Asn60 carries an N-linked (GlcNAc...) asparagine glycan. The span at 70–80 (TTVTHNPATTT) shows a compositional bias: low complexity. Residues 81–108 (SHGNATISHATVSPTTNGTATSPRSSTV) are compositionally biased toward polar residues. 2 N-linked (GlcNAc...) asparagine glycosylation sites follow: Asn84 and Asn97. Over residues 111–120 (HPGPPPPSPS) the composition is skewed to pro residues. Asn129, Asn134, Asn169, Asn218, Asn233, and Asn251 each carry an N-linked (GlcNAc...) asparagine glycan. An intrachain disulfide couples Cys139 to Cys177. Cys249 and Cys286 are oxidised to a cystine. Residues 292–316 (LLLPLIIGLVLLGLLTLVLIAFCIT) traverse the membrane as a helical segment. The Cytoplasmic segment spans residues 317–326 (RRRQSTYQPL).

It belongs to the LAMP family. Post-translationally, N- and O-glycosylated. In terms of tissue distribution, expressed in tissue macrophages and to a lesser extent in dendritic cells.

Its subcellular location is the endosome membrane. It is found in the lysosome membrane. The protein localises to the cell membrane. Its function is as follows. Could play a role in phagocytic activities of tissue macrophages, both in intracellular lysosomal metabolism and extracellular cell-cell and cell-pathogen interactions. Binds to tissue- and organ-specific lectins or selectins, allowing homing of macrophage subsets to particular sites. Rapid recirculation of CD68 from endosomes and lysosomes to the plasma membrane may allow macrophages to crawl over selectin-bearing substrates or other cells. The protein is Macrosialin (Cd68) of Mus musculus (Mouse).